Reading from the N-terminus, the 451-residue chain is LisH domain-containing protein C1711.05 (451 aa).

A LisH domain is found at 6-38 (MKSKVCPLIYHFLQENGYVKTAQTFLKETGDKD). A disordered region spans residues 59–394 (PYLTTEDVGK…VGDPSQWDFA (336 aa)). Positions 73-98 (KESLEKSNDDSQKISKKGAPPEKAHS) are enriched in basic and acidic residues. The span at 99-120 (SSEASGSGSSSDESDSSSSESE) shows a compositional bias: low complexity. Over residues 135-145 (SESESSSEDSD) the composition is skewed to acidic residues. The segment covering 146-174 (SSSSSSDSESESSSEGSDSSSSSSSSESE) has biased composition (low complexity). Residues 189–199 (SESESSSEDSD) are compositionally biased toward acidic residues. Residues 200 to 228 (SSSSSSDSESESSSEGSDSSSSSSSSESE) show a composition bias toward low complexity. Composition is skewed to acidic residues over residues 243-253 (SESESSSEDSD) and 278-300 (DSED…EDSD). Low complexity predominate over residues 301 to 319 (STSSSSDSDSSSSSEDGNS). Over residues 320 to 332 (NTDTTTSGEVSAQ) the composition is skewed to polar residues. The span at 333-343 (SSTNSTSSEES) shows a compositional bias: low complexity. Positions 344–365 (TSVKDEDSSKIHDKSLKRKHED) are enriched in basic and acidic residues. A compositionally biased stretch (low complexity) spans 369-380 (STSTKSSRTTKT).

Its subcellular location is the nucleus. It is found in the nucleolus. This Schizosaccharomyces pombe (strain 972 / ATCC 24843) (Fission yeast) protein is LisH domain-containing protein C1711.05.